Here is a 139-residue protein sequence, read N- to C-terminus: Cuticle protein 76 (139 aa).

6 repeat units span residues A7–A10, A68–A71, A75–V78, A93–P95, A105–A108, and A121–A124.

Component of the cuticle of migratory locust which contains more than 100 different structural proteins. This chain is Cuticle protein 76, found in Locusta migratoria (Migratory locust).